We begin with the raw amino-acid sequence, 383 residues long: Putative F-box/kelch-repeat protein At1g62270 (383 aa).

In terms of domain architecture, F-box spans 6-51 (TSSFSSLPWDLVEDILARVPATSLKRLRSTCKQWNFLFNDQIFTKM). Kelch repeat units lie at residues 110-158 (KVFH…YGNY), 160-211 (SCYN…LRGN), and 349-383 (TVYI…LVQI).

In Arabidopsis thaliana (Mouse-ear cress), this protein is Putative F-box/kelch-repeat protein At1g62270.